We begin with the raw amino-acid sequence, 140 residues long: Sex-regulated protein janus-B (140 aa).

Residue R42 coordinates substrate. The active-site Proton acceptor is the H69. 110–112 (SRT) is a substrate binding site.

It belongs to the janus family.

In terms of biological role, janA and janB regulate somatic sex differentiation. This is Sex-regulated protein janus-B (janB) from Drosophila simulans (Fruit fly).